The following is a 152-amino-acid chain: Superoxide dismutase [Cu-Zn] (152 aa).

Cu cation contacts are provided by histidine 45, histidine 47, and histidine 62. The cysteines at positions 56 and 145 are disulfide-linked. The Zn(2+) site is built by histidine 62, histidine 70, histidine 79, and aspartate 82. Histidine 119 provides a ligand contact to Cu cation.

It belongs to the Cu-Zn superoxide dismutase family. Homodimer. Cu cation serves as cofactor. Requires Zn(2+) as cofactor.

The protein localises to the cytoplasm. It carries out the reaction 2 superoxide + 2 H(+) = H2O2 + O2. Destroys radicals which are normally produced within the cells and which are toxic to biological systems. The chain is Superoxide dismutase [Cu-Zn] (SODCC) from Paulownia kawakamii (Dragon tree).